The sequence spans 282 residues: Elongation factor Ts (282 aa).

Positions 80-83 (TDFV) are involved in Mg(2+) ion dislocation from EF-Tu.

This sequence belongs to the EF-Ts family.

It localises to the cytoplasm. Associates with the EF-Tu.GDP complex and induces the exchange of GDP to GTP. It remains bound to the aminoacyl-tRNA.EF-Tu.GTP complex up to the GTP hydrolysis stage on the ribosome. The sequence is that of Elongation factor Ts (tsf) from Chlamydia muridarum (strain MoPn / Nigg).